Reading from the N-terminus, the 193-residue chain is Chlorate reductase assembly chaperone protein (193 aa).

The protein belongs to the type II DMSO reductase enzyme chaperone family.

Its subcellular location is the cytoplasm. May function as a system-specific chaperone protein essential for the assembly of an active chlorate reductase ClrABC. This chain is Chlorate reductase assembly chaperone protein (clrD), found in Ideonella dechloratans.